The chain runs to 172 residues: Small ribosomal subunit protein uS5 (172 aa).

Residues 16–79 (LKDRLVAINR…ESAKKNLTRV (64 aa)) enclose the S5 DRBM domain.

The protein belongs to the universal ribosomal protein uS5 family. In terms of assembly, part of the 30S ribosomal subunit. Contacts proteins S4 and S8.

With S4 and S12 plays an important role in translational accuracy. Its function is as follows. Located at the back of the 30S subunit body where it stabilizes the conformation of the head with respect to the body. This chain is Small ribosomal subunit protein uS5, found in Bacteroides fragilis (strain ATCC 25285 / DSM 2151 / CCUG 4856 / JCM 11019 / LMG 10263 / NCTC 9343 / Onslow / VPI 2553 / EN-2).